A 348-amino-acid polypeptide reads, in one-letter code: Rhodopsin (348 aa).

N-acetylmethionine is present on Met1. The Extracellular portion of the chain corresponds to 1 to 36 (MNGTEGPNFYVPFSNKTGVVRSPFEEPQYYLAEPWQ). 2 N-linked (GlcNAc...) asparagine glycosylation sites follow: Asn2 and Asn15. The chain crosses the membrane as a helical span at residues 37 to 61 (FSCLAAYMFMLIVLGFPINFLTLYV). Residues 62-73 (TIQHKKLRTPLN) are Cytoplasmic-facing. A helical transmembrane segment spans residues 74 to 96 (YILLNLAIADLFMVFGGFTTTLY). Residues 97-110 (TSLHGYFVFGPTGC) are Extracellular-facing. The cysteines at positions 110 and 187 are disulfide-linked. Residues 111–133 (DLEGFFATLGGEIALWSLVVLAI) traverse the membrane as a helical segment. The 'Ionic lock' involved in activated form stabilization signature appears at 134–136 (ERY). Over 134–152 (ERYIVVCKPMSNFRFGENH) the chain is Cytoplasmic. Residues 153–173 (AIMGVAFTWVMALACAAPPLV) traverse the membrane as a helical segment. Residues 174–202 (GWSRYIPEGMQCSCGIDYYTLKPEVNNES) are Extracellular-facing. Residue Glu201 participates in Zn(2+) binding. The helical transmembrane segment at 203–224 (FVIYMFVVHFTIPMVVIFFCYG) threads the bilayer. At 225–252 (QLVFTVKEAAAQQQESATTQKAEKEVTR) the chain is on the cytoplasmic side. A helical transmembrane segment spans residues 253–274 (MVIIMVIAFLICWLPYAGVAFY). Topologically, residues 275–286 (IFTHQGSNFGPI) are extracellular. Gln279 provides a ligand contact to Zn(2+). A helical membrane pass occupies residues 287-308 (LMTLPAFFAKTSAVYNPVIYIM). Position 296 is an N6-(retinylidene)lysine (Lys296). At 309-348 (LNKQFRTCMLTTLCCGKIPLGDDEASATASKTETSQVAPA) the chain is on the cytoplasmic side. S-palmitoyl cysteine attachment occurs at residues Cys322 and Cys323. The interval 330–348 (DDEASATASKTETSQVAPA) is interaction with SAG. The residue at position 334 (Ser334) is a Phosphoserine. At Thr336 the chain carries Phosphothreonine. Position 338 is a phosphoserine (Ser338). Phosphothreonine is present on residues Thr340 and Thr342. A Phosphoserine modification is found at Ser343.

The protein belongs to the G-protein coupled receptor 1 family. Opsin subfamily. Homodimer. May form a complex composed of RHO, GRK1 and RCVRN in a Ca(2+)-dependent manner; RCVRN prevents the interaction between GRK1 and RHO. Interacts with GRK1. Interacts (phosphorylated form) with SAG. Interacts with GNAT1. Interacts with GNAT3. SAG and G-proteins compete for a common binding site. Interacts with PRCD; the interaction promotes PRCD stability. Forms a complex with ASAP1 and ARF4. Forms a complex with ASAP1, RAB11A, Rabin8/RAB3IP, ARF4 and RAB11FIP3; the complex regulates Golgi-to-cilia rhodopsin/RHO transport in photoreceptors. Phosphorylated on some or all of the serine and threonine residues present in the C-terminal region. Post-translationally, contains one covalently linked retinal chromophore. Upon light absorption, the covalently bound 11-cis-retinal is converted to all-trans-retinal. After hydrolysis of the Schiff base and release of the covalently bound all-trans-retinal, active rhodopsin is regenerated by binding of a fresh molecule of 11-cis-retinal.

It is found in the membrane. Its subcellular location is the cell projection. The protein localises to the cilium. It localises to the photoreceptor outer segment. Its function is as follows. Photoreceptor required for image-forming vision at low light intensity. Required for photoreceptor cell viability after birth. Light-induced isomerization of 11-cis to all-trans retinal triggers a conformational change that activates signaling via G-proteins. Subsequent receptor phosphorylation mediates displacement of the bound G-protein alpha subunit by the arrestin SAG and terminates signaling. The protein is Rhodopsin (RHO) of Caluromys philander (Bare-tailed woolly opossum).